Reading from the N-terminus, the 320-residue chain is Formimidoylglutamase (320 aa).

6 residues coordinate Mn(2+): His-125, Asp-153, His-155, Asp-157, Asp-244, and Asp-246.

Belongs to the arginase family. Requires Mn(2+) as cofactor.

The enzyme catalyses N-formimidoyl-L-glutamate + H2O = formamide + L-glutamate. It participates in amino-acid degradation; L-histidine degradation into L-glutamate; L-glutamate from N-formimidoyl-L-glutamate (hydrolase route): step 1/1. Functionally, catalyzes the conversion of N-formimidoyl-L-glutamate to L-glutamate and formamide. The polypeptide is Formimidoylglutamase (Rhodococcus jostii (strain RHA1)).